The chain runs to 257 residues: MDRIIEKLDHGWWVVSHEQKLWLPKGELPYGEAANFDLVGQRALQIGEWQGEPVWLIQQQRRYDMGSVRQVIDLDVGLFQLAGRGVQLAEFYRSHKYCGYCGHEMYPSKTEWAMLCSHCRERYYPQIAPCIIVAIRRDDSILLAQHTRHRNGVHTVLAGFVEVGETLEQAVAREVMEESGIKVKHLRYVTSQPWPFPQSLMTAFMAEYDSGDIVIDPKELLEANWYRYDDLPLLPPPGTVARRLIEDTVAMCRAEYE.

Substrate contacts are provided by lysine 25 and arginine 69. Zn(2+) is bound by residues cysteine 98 and cysteine 101. A substrate-binding site is contributed by glutamate 111. Positions 116 and 119 each coordinate Zn(2+). Tyrosine 124 is a substrate binding site. Residues 125–248 (PQIAPCIIVA…TVARRLIEDT (124 aa)) enclose the Nudix hydrolase domain. The a divalent metal cation site is built by alanine 158, glutamate 174, and glutamate 178. Residues 159–180 (GFVEVGETLEQAVAREVMEESG) carry the Nudix box motif. Substrate is bound at residue 192-199 (QPWPFPQS). Glutamate 219 is a binding site for a divalent metal cation. A substrate-binding site is contributed by alanine 241.

Belongs to the Nudix hydrolase family. NudC subfamily. In terms of assembly, homodimer. Requires Mg(2+) as cofactor. Mn(2+) is required as a cofactor. The cofactor is Zn(2+).

The catalysed reaction is a 5'-end NAD(+)-phospho-ribonucleoside in mRNA + H2O = a 5'-end phospho-adenosine-phospho-ribonucleoside in mRNA + beta-nicotinamide D-ribonucleotide + 2 H(+). The enzyme catalyses NAD(+) + H2O = beta-nicotinamide D-ribonucleotide + AMP + 2 H(+). It carries out the reaction NADH + H2O = reduced beta-nicotinamide D-ribonucleotide + AMP + 2 H(+). Its function is as follows. mRNA decapping enzyme that specifically removes the nicotinamide adenine dinucleotide (NAD) cap from a subset of mRNAs by hydrolyzing the diphosphate linkage to produce nicotinamide mononucleotide (NMN) and 5' monophosphate mRNA. The NAD-cap is present at the 5'-end of some mRNAs and stabilizes RNA against 5'-processing. Has preference for mRNAs with a 5'-end purine. Catalyzes the hydrolysis of a broad range of dinucleotide pyrophosphates. In Escherichia coli O157:H7, this protein is NAD-capped RNA hydrolase NudC.